A 46-amino-acid chain; its full sequence is Protein krueppel (46 aa).

3 C2H2-type zinc fingers span residues 1 to 4, 10 to 32, and 38 to 46; these read MRLH, YHCT…LRVH, and YACELCTSK.

This sequence belongs to the krueppel C2H2-type zinc-finger protein family.

It localises to the nucleus. Krueppel is a gap class segmentation protein. This chain is Protein krueppel (Kr), found in Lithobius forficatus (Centipede).